A 64-amino-acid chain; its full sequence is UPF0434 protein TERTU_2813 (64 aa).

Belongs to the UPF0434 family.

This chain is UPF0434 protein TERTU_2813, found in Teredinibacter turnerae (strain ATCC 39867 / T7901).